Here is a 203-residue protein sequence, read N- to C-terminus: Probable cytochrome c oxidase subunit 3 (203 aa).

The next 5 membrane-spanning stretches (helical) occupy residues 30–50 (IVWL…YFTA), 70–90 (AVPV…GVFA), 102–122 (WYVI…YEYY), 142–162 (LATG…IFLL), and 179–199 (IVVS…FTVI).

Belongs to the cytochrome c oxidase subunit 3 family.

The protein localises to the cell membrane. It carries out the reaction 4 Fe(II)-[cytochrome c] + O2 + 8 H(+)(in) = 4 Fe(III)-[cytochrome c] + 2 H2O + 4 H(+)(out). In Mycolicibacterium paratuberculosis (strain ATCC BAA-968 / K-10) (Mycobacterium paratuberculosis), this protein is Probable cytochrome c oxidase subunit 3 (ctaE).